The primary structure comprises 401 residues: 8-amino-7-oxononanoate synthase (401 aa).

A substrate-binding site is contributed by Arg-24. Residue 111–112 (GF) participates in pyridoxal 5'-phosphate binding. Residue His-137 coordinates substrate. Pyridoxal 5'-phosphate-binding residues include Ser-183, His-211, and Thr-240. Lys-243 carries the N6-(pyridoxal phosphate)lysine modification. Thr-357 contacts substrate.

It belongs to the class-II pyridoxal-phosphate-dependent aminotransferase family. BioF subfamily. As to quaternary structure, homodimer. The cofactor is pyridoxal 5'-phosphate.

The enzyme catalyses 6-carboxyhexanoyl-[ACP] + L-alanine + H(+) = (8S)-8-amino-7-oxononanoate + holo-[ACP] + CO2. The protein operates within cofactor biosynthesis; biotin biosynthesis. Its function is as follows. Catalyzes the decarboxylative condensation of pimeloyl-[acyl-carrier protein] and L-alanine to produce 8-amino-7-oxononanoate (AON), [acyl-carrier protein], and carbon dioxide. This chain is 8-amino-7-oxononanoate synthase, found in Xanthomonas campestris pv. campestris (strain B100).